A 563-amino-acid polypeptide reads, in one-letter code: Coiled-coil domain-containing protein 38 (563 aa).

The stretch at 128–211 (TKKKTIKRFE…SIKSDIAKTE (84 aa)) forms a coiled coil. The interval 265 to 310 (DNSIDSDKMSVSEEWSSRRGSQGGRHGKHTLGQDSRKSSGFTRPES) is disordered. The segment covering 269–281 (DSDKMSVSEEWSS) has biased composition (basic and acidic residues). Coiled-coil stretches lie at residues 361-415 (QDVD…RSRL) and 454-522 (NAVQ…AVAQ). Positions 543-563 (QELLLVSDTRSKSQDEEYFFS) are disordered.

In terms of assembly, interacts with CCDC42, CFAP53, IFT88 and ODF2. Interacts with CCDC146. Interacts with TEKT3. Interacts with ubiquitinated histone H2A. In terms of tissue distribution, expressed exclusively in testis where it is detected mainly in spermatogonia and spermatocytes (at protein level).

Its subcellular location is the cytoplasm. The protein localises to the cytoskeleton. It is found in the microtubule organizing center. The protein resides in the centrosome. It localises to the perinuclear region. Its subcellular location is the cell projection. The protein localises to the cilium. It is found in the flagellum. In terms of biological role, essential for male fertility. Required for sperm flagellum biogenesis. Also required for acrosome biogenesis. Required for the attachment of developing acrosomes to the nucleus during spermiogenesis and may be involved in the transport of fibrous sheath components. The chain is Coiled-coil domain-containing protein 38 (Ccdc38) from Mus musculus (Mouse).